The chain runs to 408 residues: Aurora kinase A-B (408 aa).

The segment covering 1–10 (MERAVKENHK) has biased composition (basic and acidic residues). The segment at 1 to 128 (MERAVKENHK…QGKTLAVPKE (128 aa)) is disordered. The span at 85–110 (GHQTSKPQGPNENRNPQQTSHSSTPN) shows a compositional bias: polar residues. Residues 140 to 390 (FEIGRPLGKG…LKGVLEHPWI (251 aa)) enclose the Protein kinase domain. ATP-binding positions include Lys150, Lys169, and 217–220 (LDYA). The active-site Proton acceptor is the Asp263. Residue Asp281 participates in ATP binding. The activation segment stretch occupies residues 287–300 (HAPSSRRTTLCGTL).

It belongs to the protein kinase superfamily. Ser/Thr protein kinase family. Aurora subfamily. Interacts with kif2c and kif11. In terms of processing, phosphorylated. Autophosphorylated on a serine residue.

The protein resides in the cytoplasm. Its subcellular location is the cytoskeleton. It localises to the spindle pole. The protein localises to the microtubule organizing center. It is found in the centrosome. It catalyses the reaction L-seryl-[protein] + ATP = O-phospho-L-seryl-[protein] + ADP + H(+). The catalysed reaction is L-threonyl-[protein] + ATP = O-phospho-L-threonyl-[protein] + ADP + H(+). Mitotic serine/threonine kinases that contributes to the regulation of cell cycle progression. Associates with the centrosome and the spindle microtubules during mitosis and plays a critical role in various mitotic events including the establishment of mitotic spindle, centrosome duplication, centrosome separation as well as maturation, chromosomal alignment, spindle assembly checkpoint, and cytokinesis. Phosphorylates numerous target proteins. Important for microtubule formation and/or stabilization. This is Aurora kinase A-B (aurka-b) from Xenopus laevis (African clawed frog).